The following is a 940-amino-acid chain: UvrABC system protein A (940 aa).

An ATP-binding site is contributed by 31-38 (GLSGSGKS). A C4-type zinc finger spans residues 252–279 (CPHCGYSMQELEPRLFSFNNPAGACGTC). 2 consecutive ABC transporter domains span residues 309–586 (WDQK…PDSL) and 606–936 (RDKN…RFLK). ATP is bound at residue 639–646 (GVSGSGKS). The segment at 739-765 (CEACQGDGVIKVEMHFLPDVYVPCDVC) adopts a C4-type zinc-finger fold.

This sequence belongs to the ABC transporter superfamily. UvrA family. As to quaternary structure, forms a heterotetramer with UvrB during the search for lesions.

It is found in the cytoplasm. Its function is as follows. The UvrABC repair system catalyzes the recognition and processing of DNA lesions. UvrA is an ATPase and a DNA-binding protein. A damage recognition complex composed of 2 UvrA and 2 UvrB subunits scans DNA for abnormalities. When the presence of a lesion has been verified by UvrB, the UvrA molecules dissociate. This Vibrio vulnificus (strain CMCP6) protein is UvrABC system protein A.